The chain runs to 176 residues: Replication restart protein PriC (176 aa).

It belongs to the PriC family. As to quaternary structure, component of the replication restart primosome, which is composed of PriA, PriB, PriC, DnaB and DnaT; DnaG primase associates transiently with this complex. Interacts with the C-terminus of SSB; this interaction is required to load the main replicative helicase onto substrate replication forks. Interacts with helicase DnaB alone and in the DnaB-DnaC complex, probably 1:1 binding with DnaB. Interacts with DnaT.

In terms of biological role, involved in the restart of stalled replication forks, which reloads the DnaB replicative helicase on sites other than the origin of replication. Recognizes abandoned replication forks and remodels DNA single-stranded binding protein (SSB) on ssDNA to uncover a loading site for DnaB. There are several restart pathways, the PriA-PriC pathway is a minor restart pathway. Part of the minor PriC-Rep pathway for restart of stalled replication forks, which has a different substrate specificity than PriA. Part of the major restart pathway with PriA, PriB, DnaB, DnaT and DnaG primase. priB and priC have redundant roles in the cell. Binds 7-9 nucleotides of single-stranded (ss)DNA. This chain is Replication restart protein PriC, found in Klebsiella pneumoniae subsp. pneumoniae (strain ATCC 700721 / MGH 78578).